Here is a 379-residue protein sequence, read N- to C-terminus: Chaperone protein DnaJ (379 aa).

Positions 5 to 70 (DYYETLGCDR…QKRAAYDRFG (66 aa)) constitute a J domain. The CR-type zinc finger occupies 134 to 212 (GKTAQIKIPT…CGGAGRVTRE (79 aa)). Zn(2+) contacts are provided by Cys-147, Cys-150, Cys-164, Cys-167, Cys-186, Cys-189, Cys-200, and Cys-203. CXXCXGXG motif repeat units lie at residues 147–154 (CETCSGTG), 164–171 (CRMCGGAG), 186–193 (CPNCQGRG), and 200–207 (CSDCGGAG).

Belongs to the DnaJ family. As to quaternary structure, homodimer. Requires Zn(2+) as cofactor.

Its subcellular location is the cytoplasm. In terms of biological role, participates actively in the response to hyperosmotic and heat shock by preventing the aggregation of stress-denatured proteins and by disaggregating proteins, also in an autonomous, DnaK-independent fashion. Unfolded proteins bind initially to DnaJ; upon interaction with the DnaJ-bound protein, DnaK hydrolyzes its bound ATP, resulting in the formation of a stable complex. GrpE releases ADP from DnaK; ATP binding to DnaK triggers the release of the substrate protein, thus completing the reaction cycle. Several rounds of ATP-dependent interactions between DnaJ, DnaK and GrpE are required for fully efficient folding. Also involved, together with DnaK and GrpE, in the DNA replication of plasmids through activation of initiation proteins. The polypeptide is Chaperone protein DnaJ (Xanthobacter autotrophicus (strain ATCC BAA-1158 / Py2)).